A 776-amino-acid chain; its full sequence is Protocadherin beta-16 (776 aa).

Positions 1-28 are cleaved as a signal peptide; that stretch reads MEIGWMHNRRQRQVLVFFVLLSLSGAGA. Over 29–690 the chain is Extracellular; that stretch reads ELGSYSVVEE…TQANSLTVYL (662 aa). 5 consecutive Cadherin domains span residues 35–133, 138–242, 247–347, 352–451, and 456–561; these read VVEE…SPMF, MILK…APEF, YKVQ…PPQV, LTSP…APTF, and YTLF…SPFV. N-linked (GlcNAc...) asparagine glycans are attached at residues asparagine 418 and asparagine 436. N-linked (GlcNAc...) asparagine glycosylation is present at asparagine 567. Positions 568–671 constitute a Cadherin 6 domain; the sequence is GSAPCTELVP…LVDGFSQPFL (104 aa). Residues 691–711 form a helical membrane-spanning segment; the sequence is VVALASVSSLFLFSVLLFVAV. Over 712-776 the chain is Cytoplasmic; the sequence is RLCRRSRAAS…LKPIIPNFSP (65 aa).

Its subcellular location is the membrane. Functionally, potential calcium-dependent cell-adhesion protein. May be involved in the establishment and maintenance of specific neuronal connections in the brain. The polypeptide is Protocadherin beta-16 (Homo sapiens (Human)).